We begin with the raw amino-acid sequence, 287 residues long: Co-chaperone protein DjlA (287 aa).

The Periplasmic segment spans residues 1–6; the sequence is MQIFGK. A helical transmembrane segment spans residues 7-30; it reads ILGAFFGFLFGGVFGALFGLFIGH. Residues 31–287 are Cytoplasmic-facing; sequence QFDKARRLSQ…DLIKKEKGFK (257 aa). The segment at 192-213 is disordered; it reads GGFGGQQHQSHHSSSHGGWQQA. Positions 221 to 287 constitute a J domain; it reads DAYKILGIDA…DLIKKEKGFK (67 aa).

Homodimer.

It localises to the cell inner membrane. Functionally, regulatory DnaK co-chaperone. Direct interaction between DnaK and DjlA is needed for the induction of the wcaABCDE operon, involved in the synthesis of a colanic acid polysaccharide capsule, possibly through activation of the RcsB/RcsC phosphotransfer signaling pathway. The colanic acid capsule may help the bacterium survive conditions outside the host. The protein is Co-chaperone protein DjlA of Vibrio vulnificus (strain CMCP6).